Here is a 424-residue protein sequence, read N- to C-terminus: Elongation factor 1-alpha (424 aa).

Residues 5-223 enclose the tr-type G domain; sequence KPHMNLVIIG…NALQVPAKPV (219 aa). The segment at 14 to 21 is G1; the sequence is GHVDHGKS. 14 to 21 is a GTP binding site; it reads GHVDHGKS. S21 contacts Mg(2+). The segment at 70–74 is G2; the sequence is GVTID. Positions 91 to 94 are G3; sequence DAPG. Residues 91–95 and 148–151 each bind GTP; these read DAPGH and NKMD. Residues 148–151 form a G4 region; the sequence is NKMD. The segment at 187-189 is G5; that stretch reads SGY.

This sequence belongs to the TRAFAC class translation factor GTPase superfamily. Classic translation factor GTPase family. EF-Tu/EF-1A subfamily.

It localises to the cytoplasm. It catalyses the reaction GTP + H2O = GDP + phosphate + H(+). GTP hydrolase that promotes the GTP-dependent binding of aminoacyl-tRNA to the A-site of ribosomes during protein biosynthesis. In Picrophilus torridus (strain ATCC 700027 / DSM 9790 / JCM 10055 / NBRC 100828 / KAW 2/3), this protein is Elongation factor 1-alpha.